The following is a 542-amino-acid chain: Chaperonin GroEL (542 aa).

Residues Thr29–Pro32, Asp86–Thr90, Gly413, Asn476–Ala478, and Asp492 each bind ATP. The tract at residues Glu523–Met542 is disordered. A compositionally biased stretch (low complexity) spans Ala526–Met542.

This sequence belongs to the chaperonin (HSP60) family. As to quaternary structure, forms a cylinder of 14 subunits composed of two heptameric rings stacked back-to-back. Interacts with the co-chaperonin GroES.

It is found in the cytoplasm. The catalysed reaction is ATP + H2O + a folded polypeptide = ADP + phosphate + an unfolded polypeptide.. In terms of biological role, together with its co-chaperonin GroES, plays an essential role in assisting protein folding. The GroEL-GroES system forms a nano-cage that allows encapsulation of the non-native substrate proteins and provides a physical environment optimized to promote and accelerate protein folding. The sequence is that of Chaperonin GroEL from Streptococcus uberis (strain ATCC BAA-854 / 0140J).